The primary structure comprises 149 residues: Large ribosomal subunit protein bL9 (149 aa).

This sequence belongs to the bacterial ribosomal protein bL9 family.

Functionally, binds to the 23S rRNA. This Pasteurella multocida (strain Pm70) protein is Large ribosomal subunit protein bL9.